A 929-amino-acid polypeptide reads, in one-letter code: Thrombospondin-3b (929 aa).

The signal sequence occupies residues 1-22; it reads MELRKIVPNLLVLYVAVHFSQS. One can recognise a Laminin G-like domain in the interval 24-192; sequence EIKVINVLEL…VESVKLALGG (169 aa). N-linked (GlcNAc...) asparagine glycosylation occurs at asparagine 45. Disulfide bonds link cysteine 277–cysteine 288, cysteine 282–cysteine 299, cysteine 319–cysteine 343, cysteine 349–cysteine 362, cysteine 356–cysteine 371, cysteine 374–cysteine 386, cysteine 392–cysteine 406, cysteine 400–cysteine 416, cysteine 418–cysteine 429, cysteine 445–cysteine 452, cysteine 457–cysteine 477, cysteine 493–cysteine 513, cysteine 516–cysteine 536, cysteine 552–cysteine 572, cysteine 575–cysteine 595, cysteine 613–cysteine 633, cysteine 653–cysteine 673, and cysteine 689–cysteine 910. Residues 345–384 form the EGF-like 1; calcium-binding domain; the sequence is DIDECAELSGSCVPNSVCINTVGSFKCGQCKAGFVGNQTV. N-linked (GlcNAc...) asparagine glycosylation occurs at asparagine 381. In terms of domain architecture, EGF-like 2 spans 388-430; that stretch reads ARRTCETLGYSPCDVNSHCVMGRNSDVSCVCNVGWAGNGNICG. 8 TSP type-3 repeats span residues 431 to 465, 466 to 501, 502 to 524, 525 to 560, 561 to 583, 584 to 621, 622 to 661, and 662 to 697; these read PDSD…NSGQ, EDTD…NKDQ, QNSD…NGDQ, LDTD…NPMQ, TDRD…DPLQ, SDMD…NSSQ, LDSD…NPSQ, and IDTD…EVTM. Residues 602 to 613 show a composition bias toward basic and acidic residues; it reads DGDGYQDTRDNC. The tract at residues 602 to 651 is disordered; it reads DGDGYQDTRDNCPEVPNSSQLDSDNDGIGDECDDDDDNDGIPDILPPGPD. Asparagine 618 carries an N-linked (GlcNAc...) asparagine glycan. Positions 624–641 are enriched in acidic residues; the sequence is SDNDGIGDECDDDDDNDG. Positions 701-915 constitute a TSP C-terminal domain; sequence RAFQTVILDP…LGYRCNDSIP (215 aa). Asparagine 911 is a glycosylation site (N-linked (GlcNAc...) asparagine).

Belongs to the thrombospondin family. In terms of assembly, oligomer; disulfide-linked.

In terms of biological role, adhesive glycoprotein that mediates cell-to-cell and cell-to-matrix interactions. Can bind to fibrinogen, fibronectin, laminin and type V collagen. This Danio rerio (Zebrafish) protein is Thrombospondin-3b.